Here is a 408-residue protein sequence, read N- to C-terminus: Probable E3 ubiquitin-protein ligase makorin-1 (408 aa).

2 C3H1-type zinc fingers span residues 34-61 (WTRHVTCRYFIHGVCKEGINCRYSHDLA) and 63-90 (SRSAMICRYFQRGCCAYGDRCRYEHNKP). Disordered stretches follow at residues 90–114 (PLQEDPTGDTCTAPSESLPEPSGNI) and 154–173 (EAYTQGTVKPDEGREEPADP). Basic and acidic residues predominate over residues 162 to 173 (KPDEGREEPADP). The C3H1-type 3 zinc-finger motif lies at 174–201 (ELKKQLCPYAAMGECRYGENCVYLHGDP). The tract at residues 202–229 (CDMCGLQVLHPVDTCQRSQHIKSCIEAH) is makorin-type Cys-His. Residues 247–301 (CGICMEVVYEKTNPSERRFGILSNCSHSYCLKCIRKWRSAKQFESKIIKSCPECR) form an RING-type zinc finger. The C3H1-type 4 zinc-finger motif lies at 330 to 359 (AMSSKSCRYFDEGRGTCPFGGNCFYRHAYP). Residues 363 to 408 (IEEPQPRQKSGMSSRYRIPSPSAGIDFGSLTSERAETRLRTRKTKL) are disordered.

It carries out the reaction S-ubiquitinyl-[E2 ubiquitin-conjugating enzyme]-L-cysteine + [acceptor protein]-L-lysine = [E2 ubiquitin-conjugating enzyme]-L-cysteine + N(6)-ubiquitinyl-[acceptor protein]-L-lysine.. It participates in protein modification; protein ubiquitination. In terms of biological role, E3 ubiquitin ligase catalyzing the covalent attachment of ubiquitin moieties onto substrate proteins. The polypeptide is Probable E3 ubiquitin-protein ligase makorin-1 (mkrn1) (Xenopus laevis (African clawed frog)).